The sequence spans 104 residues: L-rhamnose mutarotase (104 aa).

Substrate is bound at residue Y18. H22 acts as the Proton donor in catalysis. Residues Y41 and 76 to 77 each bind substrate; that span reads WW.

This sequence belongs to the rhamnose mutarotase family. Homodimer.

The protein resides in the cytoplasm. The enzyme catalyses alpha-L-rhamnose = beta-L-rhamnose. It participates in carbohydrate metabolism; L-rhamnose metabolism. In terms of biological role, involved in the anomeric conversion of L-rhamnose. This is L-rhamnose mutarotase from Enterobacter sp. (strain 638).